The sequence spans 366 residues: Tetraacyldisaccharide 4'-kinase (366 aa).

Residue 51–58 coordinates ATP; sequence TVGGTGKT.

Belongs to the LpxK family.

It catalyses the reaction a lipid A disaccharide + ATP = a lipid IVA + ADP + H(+). It functions in the pathway glycolipid biosynthesis; lipid IV(A) biosynthesis; lipid IV(A) from (3R)-3-hydroxytetradecanoyl-[acyl-carrier-protein] and UDP-N-acetyl-alpha-D-glucosamine: step 6/6. Its function is as follows. Transfers the gamma-phosphate of ATP to the 4'-position of a tetraacyldisaccharide 1-phosphate intermediate (termed DS-1-P) to form tetraacyldisaccharide 1,4'-bis-phosphate (lipid IVA). This Phocaeicola vulgatus (strain ATCC 8482 / DSM 1447 / JCM 5826 / CCUG 4940 / NBRC 14291 / NCTC 11154) (Bacteroides vulgatus) protein is Tetraacyldisaccharide 4'-kinase.